An 82-amino-acid polypeptide reads, in one-letter code: Putative defensin-like protein 48 (82 aa).

Residues 1-28 (MGIKTLIIFFHIFILAVLSSNNIILTSG) form the signal peptide. Cystine bridges form between C39/C80, C43/C67, C53/C78, and C57/C79.

Belongs to the DEFL family.

The protein resides in the secreted. The chain is Putative defensin-like protein 48 from Arabidopsis thaliana (Mouse-ear cress).